Consider the following 538-residue polypeptide: Probable inorganic phosphate transporter 1-4 (538 aa).

Over 1-23 (MAGELKVLNALDSAKTQWYHFTA) the chain is Cytoplasmic. The helical transmembrane segment at 24–44 (IVIAGMGFFTDAYDLFSISLV) threads the bilayer. Over 45–69 (TKLLGRIYYFNPASKSPGSLPPNVS) the chain is Extracellular. The helical transmembrane segment at 70–90 (AAVNGVAFCGTLAGQLFFGWL) threads the bilayer. Residues 91–98 (GDKMGRKK) lie on the Cytoplasmic side of the membrane. A helical membrane pass occupies residues 99–119 (VYGMTLMLMVICCLASGLSFG). Residues 120–123 (SSAK) are Extracellular-facing. A helical membrane pass occupies residues 124-144 (GVMATLCFFRFWLGFGIGGDY). Residues 145 to 163 (PLSATIMSEYANKRTRGAF) lie on the Cytoplasmic side of the membrane. A helical transmembrane segment spans residues 164-184 (IAAVFAMQGFGNLTGGIVAII). Residues 185–210 (VSAAFKARFDAPAYRDDRAGSTVPQA) lie on the Extracellular side of the membrane. The helical transmembrane segment at 211–231 (DYAWRIVLMFGAIPALLTYYW) threads the bilayer. Residues 232-294 (RMKMPETARY…RQFLRRHGRH (63 aa)) lie on the Cytoplasmic side of the membrane. The helical transmembrane segment at 295 to 315 (LLGTTVCWFVLDIAFYSSNLF) threads the bilayer. Topologically, residues 316-346 (QKDIYTAVQWLPKADTMSALEEMFKISRAQT) are extracellular. Residues 347 to 367 (LVALCGTIPGYWFTVFFIDII) form a helical membrane-spanning segment. Over 368-369 (GR) the chain is Cytoplasmic. The chain crosses the membrane as a helical span at residues 370 to 390 (FVIQLGGFFFMTAFMLGLAVP). At 391–396 (YHHWTT) the chain is on the extracellular side. Residues 397–417 (PGNHIGFVVMYAFTFFFANFG) form a helical membrane-spanning segment. Residues 418-440 (PNSTTFIVPAEIFPARLRSTCHG) lie on the Cytoplasmic side of the membrane. Residues 441 to 461 (ISAAAGKAGAIVGSFGFLYAA) traverse the membrane as a helical segment. Residues 462 to 481 (QSTDASKTDAGYPPGIGVRN) are Extracellular-facing. The helical transmembrane segment at 482–502 (SLFFLAGCNVIGFFFTFLVPE) threads the bilayer. The Cytoplasmic portion of the chain corresponds to 503–538 (SKGKSLEELSGENEDDDDVPEAPSTADHRTAPAPPA). The tract at residues 507–538 (SLEELSGENEDDDDVPEAPSTADHRTAPAPPA) is disordered. The segment covering 511 to 522 (LSGENEDDDDVP) has biased composition (acidic residues).

The protein belongs to the major facilitator superfamily. Phosphate:H(+) symporter (TC 2.A.1.9) family.

Its subcellular location is the membrane. Functionally, high-affinity transporter for external inorganic phosphate. This Oryza sativa subsp. indica (Rice) protein is Probable inorganic phosphate transporter 1-4 (PHT1-4).